The following is an 87-amino-acid chain: MNSLLMITACLALVGTVWAKEGYLVNSYTGCKYECFKLGDNDYCLRECKQQYGKGAGGYCYAFGCWCTHLYEQAVVWPLKNKTCNGK.

Residues 1-19 form the signal peptide; it reads MNSLLMITACLALVGTVWA. In terms of domain architecture, LCN-type CS-alpha/beta spans 20 to 85; that stretch reads KEGYLVNSYT…VWPLKNKTCN (66 aa). 4 disulfide bridges follow: C31-C84, C35-C60, C44-C65, and C48-C67. N85 bears the Asparagine amide mark.

It belongs to the long (4 C-C) scorpion toxin superfamily. Sodium channel inhibitor family. Beta subfamily. As to expression, expressed by the venom gland.

The protein localises to the secreted. In terms of biological role, beta toxins bind voltage-independently at site-4 of sodium channels (Nav) and shift the voltage of activation toward more negative potentials thereby affecting sodium channel activation and promoting spontaneous and repetitive firing. This toxin affects the activation mechanism of sodium channels of squid axon. It also competes with Cn2 in rat brain synaptosomes. Is lethal to mice. In Centruroides noxius (Mexican scorpion), this protein is Beta-toxin Cn4.